A 517-amino-acid polypeptide reads, in one-letter code: Maturase K (517 aa).

It belongs to the intron maturase 2 family. MatK subfamily.

It is found in the plastid. Its subcellular location is the chloroplast. In terms of biological role, usually encoded in the trnK tRNA gene intron. Probably assists in splicing its own and other chloroplast group II introns. The polypeptide is Maturase K (Veronica arvensis (Wall speedwell)).